A 163-amino-acid chain; its full sequence is Ankyrin repeat domain-containing protein 37 (163 aa).

ANK repeat units lie at residues 29–58 (LGQS…DVNQ), 62–91 (FGEA…RIDM), and 95–124 (DGHT…TQDT). Positions 129–149 (QSSLHNLKETAAGVKRGQCCQ) match the Nuclear localization signal motif.

The protein localises to the nucleus. It is found in the cytoplasm. The protein is Ankyrin repeat domain-containing protein 37 (ankrd37) of Xenopus tropicalis (Western clawed frog).